Consider the following 764-residue polypeptide: Molybdenum cofactor sulfurase 1 (764 aa).

K228 is subject to N6-(pyridoxal phosphate)lysine. C394 is an active-site residue. Residues L607–L762 enclose the MOSC domain.

It belongs to the class-V pyridoxal-phosphate-dependent aminotransferase family. MOCOS subfamily. It depends on pyridoxal 5'-phosphate as a cofactor.

It catalyses the reaction Mo-molybdopterin + L-cysteine + AH2 = thio-Mo-molybdopterin + L-alanine + A + H2O. Sulfurates the molybdenum cofactor. Sulfation of molybdenum is essential for xanthine dehydrogenase (XDH) and aldehyde oxidase (ADO) enzymes in which molybdenum cofactor is liganded by 1 oxygen and 1 sulfur atom in active form. The protein is Molybdenum cofactor sulfurase 1 of Aedes aegypti (Yellowfever mosquito).